We begin with the raw amino-acid sequence, 233 residues long: CDP-diacylglycerol--glycerol-3-phosphate 3-phosphatidyltransferase 2 (233 aa).

The tract at residues 1-23 (MGEEDTATVDQNSFGGGKDSLLR) is disordered. 5 helical membrane-spanning segments follow: residues 40 to 60 (VITL…ILVA), 71 to 91 (TATT…GYIA), 100 to 120 (FGAF…LILL), 125 to 145 (MVAV…IAII), and 201 to 221 (LPSG…SLVV).

The protein belongs to the CDP-alcohol phosphatidyltransferase class-I family. Mn(2+) is required as a cofactor.

The protein resides in the microsome membrane. Its subcellular location is the endoplasmic reticulum membrane. The enzyme catalyses a CDP-1,2-diacyl-sn-glycerol + sn-glycerol 3-phosphate = a 1,2-diacyl-sn-glycero-3-phospho-(1'-sn-glycero-3'-phosphate) + CMP + H(+). Its pathway is phospholipid metabolism; phosphatidylglycerol biosynthesis; phosphatidylglycerol from CDP-diacylglycerol: step 1/2. Functionally, catalyzes the committed step to the synthesis of the acidic phospholipids, including phosphatidylglycerol (PG). Together with PGPS1, required for the proper embryo development by providing PG accurate levels. The protein is CDP-diacylglycerol--glycerol-3-phosphate 3-phosphatidyltransferase 2 of Arabidopsis thaliana (Mouse-ear cress).